The sequence spans 120 residues: Succinate dehydrogenase assembly factor 3, mitochondrial (120 aa).

A mitochondrion-targeting transit peptide spans 1 to 36 (MSRILMSQLTHPQRVRLLYKTILRLHRGLPAELRAL).

It belongs to the complex I LYR family. SDHAF3 subfamily. As to quaternary structure, interacts with SdhB within an SdhA-SdhB subcomplex.

It is found in the mitochondrion matrix. Its function is as follows. Plays an essential role in the assembly of succinate dehydrogenase (SDH), an enzyme complex (also referred to as respiratory complex II) that is a component of both the tricarboxylic acid (TCA) cycle and the mitochondrial electron transport chain, and which couples the oxidation of succinate to fumarate with the reduction of ubiquinone (coenzyme Q) to ubiquinol. Promotes maturation of the iron-sulfur protein subunit SdhB of the SDH catalytic dimer, protecting it from the deleterious effects of oxidants. This Drosophila melanogaster (Fruit fly) protein is Succinate dehydrogenase assembly factor 3, mitochondrial.